Reading from the N-terminus, the 85-residue chain is Large ribosomal subunit protein bL27 (85 aa).

Residues 1–22 (MAHKKGQGSSRNGRDSPGQRRG) form a disordered region.

It belongs to the bacterial ribosomal protein bL27 family.

The protein is Large ribosomal subunit protein bL27 of Anaeromyxobacter dehalogenans (strain 2CP-1 / ATCC BAA-258).